Consider the following 732-residue polypeptide: Protein kinase YpkA (732 aa).

The region spanning 136-408 is the Protein kinase domain; sequence VAETDKFAEG…SNEARLHEFL (273 aa). Residues 142 to 150 and Lys163 each bind ATP; that span reads FAEGESHIS. Asp270 functions as the Proton acceptor in the catalytic mechanism.

It belongs to the protein kinase superfamily. Ser/Thr protein kinase family.

Its subcellular location is the secreted. It carries out the reaction L-seryl-[protein] + ATP = O-phospho-L-seryl-[protein] + ADP + H(+). It catalyses the reaction L-threonyl-[protein] + ATP = O-phospho-L-threonyl-[protein] + ADP + H(+). Its function is as follows. Acts as a virulence determinant. This chain is Protein kinase YpkA (ypkA), found in Yersinia pseudotuberculosis serotype I (strain IP32953).